We begin with the raw amino-acid sequence, 957 residues long: Receptor-like protein 53 (957 aa).

The N-terminal stretch at 1 to 30 (MEGFWNSKSIIRITLSFIFLFICHFLDVLA) is a signal peptide. The Extracellular segment spans residues 31-910 (APTRNLCRPE…EEEDEDLISW (880 aa)). N-linked (GlcNAc...) asparagine glycosylation is found at Asn78, Asn114, Asn143, Asn167, and Asn191. LRR repeat units lie at residues 120–143 (LHFL…SIEN), 144–170 (LSHL…NLSR), 172–192 (TYLN…ICNL), 193–216 (SHLT…IGGL), 217–240 (SHLT…IGNL), 241–266 (SNLT…NLSQ), 268–287 (TFLG…SFGN), 288–312 (LNQL…LLNL), 313–336 (TGLS…ITSL), 338–360 (NLMD…LFTI), 361–384 (PSLT…NISS), and 386–409 (SNLY…ISKL). Asn239, Asn242, Asn252, and Asn263 each carry an N-linked (GlcNAc...) asparagine glycan. N-linked (GlcNAc...) asparagine glycans are attached at residues Asn311 and Asn332. Asn381 carries N-linked (GlcNAc...) asparagine glycosylation. An LRR 13; degenerate repeat occupies 412–433 (LFRLDISHLNTQGPVDFSIFSH). 16 LRR repeats span residues 434–458 (LKSL…YFLS), 460–483 (FKRL…SVSD), 486–509 (SQLI…VRTQ), 510–533 (HELG…LWRL), 535–556 (ILYY…SKPE), 558–580 (SLLY…ICGL), 581–604 (RSLN…MGHL), 605–629 (KSTL…IFEI), 631–651 (RSLD…LSFF), 652–674 (STLE…WLSS), 675–697 (LPKL…EATF), 698–721 (PELR…YFVK), 765–789 (LTIY…IGLL), 790–813 (KELL…MGNL), 814–837 (TALE…LGDL), and 839–862 (FLAY…QFLT). Residues Asn441, Asn446, and Asn477 are each glycosylated (N-linked (GlcNAc...) asparagine). N-linked (GlcNAc...) asparagine glycosylation is found at Asn540 and Asn543. Asn594 carries N-linked (GlcNAc...) asparagine glycosylation. Asn665 carries an N-linked (GlcNAc...) asparagine glycan. Residue Asn711 is glycosylated (N-linked (GlcNAc...) asparagine). An N-linked (GlcNAc...) asparagine glycan is attached at Asn812. Residues Asn844 and Asn864 are each glycosylated (N-linked (GlcNAc...) asparagine). A helical membrane pass occupies residues 911–931 (IAAAIGFGPGIAFGLMFGYIL). The Cytoplasmic portion of the chain corresponds to 932–957 (VSYKPEWFMNPFDRNNRRQKRHKTTH).

It belongs to the RLP family.

The protein resides in the cell membrane. This chain is Receptor-like protein 53, found in Arabidopsis thaliana (Mouse-ear cress).